A 229-amino-acid chain; its full sequence is Transmembrane emp24 domain-containing protein 5 (229 aa).

Positions M1–G27 are cleaved as a signal peptide. Topologically, residues F28–N196 are lumenal. Residues K45–L126 enclose the GOLD domain. Residues F197–L217 traverse the membrane as a helical segment. Over K218 to T229 the chain is Cytoplasmic.

Belongs to the EMP24/GP25L family. Interacts with TMED9 and TMED10.

The protein localises to the endoplasmic reticulum membrane. The protein resides in the golgi apparatus. It localises to the cis-Golgi network membrane. Its subcellular location is the endoplasmic reticulum-Golgi intermediate compartment membrane. Functionally, potential role in vesicular protein trafficking, mainly in the early secretory pathway. Required for the maintenance of the Golgi apparatus; involved in protein exchange between Golgi stacks during assembly. Probably not required for COPI-vesicle-mediated retrograde transport. The sequence is that of Transmembrane emp24 domain-containing protein 5 (TMED5) from Homo sapiens (Human).